The following is a 313-amino-acid chain: Putative olfactory receptor 2B3 (313 aa).

The Extracellular portion of the chain corresponds to 1–25 (MNWENESSPKEFILLGFSDRAWLQM). An N-linked (GlcNAc...) asparagine glycan is attached at N5. The chain crosses the membrane as a helical span at residues 26–49 (PLFVVLLISYTITIFGNVSIMMVC). Topologically, residues 50–57 (ILDPKLHT) are cytoplasmic. A helical transmembrane segment spans residues 58–79 (PMYFFLTNLSILDLCYTTTTVP). At 80 to 100 (HMLVNIGCNKKTISYAGCVAH) the chain is on the extracellular side. C97 and C189 are oxidised to a cystine. Residues 101-120 (LIIFLALGATECLLLAVMSF) traverse the membrane as a helical segment. The Cytoplasmic portion of the chain corresponds to 121 to 139 (DRYVAVCRPLHYVVIMNYW). The helical transmembrane segment at 140–158 (FCLRMAAFSWLIGFGNSVL) threads the bilayer. Residues 159-195 (QSSLTLNMPRCGHQEVDHFFCEVPALLKLSCADTKPI) are Extracellular-facing. Residues 196–219 (EAELFFFSVLILLIPVTLILISYG) traverse the membrane as a helical segment. Topologically, residues 220–236 (FIAQAVLKIRSAEGRQK) are cytoplasmic. Residues 237–259 (AFGTCGSHMIVVSLFYGTAIYMY) traverse the membrane as a helical segment. Residues 260-272 (LQPPSSTSKDWGK) lie on the Extracellular side of the membrane. A helical membrane pass occupies residues 273–292 (MVSLFYGIITSMLNSLIYSL). Over 293–313 (RNKDMKEAFKRLMPRIFFCKK) the chain is Cytoplasmic.

This sequence belongs to the G-protein coupled receptor 1 family.

The protein localises to the cell membrane. Odorant receptor. In Homo sapiens (Human), this protein is Putative olfactory receptor 2B3 (OR2B3).